We begin with the raw amino-acid sequence, 151 residues long: UPF0208 membrane protein YfbV (151 aa).

2 helical membrane passes run 46 to 65 (FGIR…QIAL) and 69 to 91 (LGPA…WWLG).

It belongs to the UPF0208 family.

The protein localises to the cell inner membrane. The sequence is that of UPF0208 membrane protein YfbV (yfbV) from Photorhabdus temperata.